We begin with the raw amino-acid sequence, 462 residues long: Putative ABC transporter A445L (462 aa).

The protein belongs to the protein kinase superfamily. ADCK protein kinase family.

The protein is Putative ABC transporter A445L of Chlorella (PBCV-1).